We begin with the raw amino-acid sequence, 720 residues long: Polyribonucleotide nucleotidyltransferase (720 aa).

Mg(2+)-binding residues include D484 and D490. A KH domain is found at 551–610; sequence PRMYKINIDPSKIGSVIGSGGKTIRSIIEQTNTTVDIENDGTVVIGATDEASAKKAIKII. One can recognise an S1 motif domain in the interval 620–688; it reads GSIYTGKVTR…NQGRVNLSHR (69 aa). Residues 697-720 are disordered; sequence PISRNRDSQPRRPGPFRPSDRSNS.

Belongs to the polyribonucleotide nucleotidyltransferase family. Mg(2+) serves as cofactor.

Its subcellular location is the cytoplasm. The catalysed reaction is RNA(n+1) + phosphate = RNA(n) + a ribonucleoside 5'-diphosphate. Its function is as follows. Involved in mRNA degradation. Catalyzes the phosphorolysis of single-stranded polyribonucleotides processively in the 3'- to 5'-direction. The protein is Polyribonucleotide nucleotidyltransferase of Dehalococcoides mccartyi (strain CBDB1).